The chain runs to 573 residues: Methionine--tRNA ligase (573 aa).

The 'HIGH' region motif lies at 10–20; the sequence is PYVNSVPHLGN. Residues Cys143, Cys146, Cys156, and Cys159 each contribute to the Zn(2+) site. The short motif at 333–337 is the 'KMSKS' region element; it reads KFSKS. Position 336 (Lys336) interacts with ATP.

It belongs to the class-I aminoacyl-tRNA synthetase family. MetG type 1 subfamily. Requires Zn(2+) as cofactor.

The protein resides in the cytoplasm. It catalyses the reaction tRNA(Met) + L-methionine + ATP = L-methionyl-tRNA(Met) + AMP + diphosphate. In terms of biological role, is required not only for elongation of protein synthesis but also for the initiation of all mRNA translation through initiator tRNA(fMet) aminoacylation. This Saccharolobus solfataricus (strain ATCC 35092 / DSM 1617 / JCM 11322 / P2) (Sulfolobus solfataricus) protein is Methionine--tRNA ligase.